A 778-amino-acid chain; its full sequence is Mitochondrial intermediate peptidase (778 aa).

A mitochondrion-targeting transit peptide spans 1 to 37; the sequence is MIRTVTRPRQWQRWVYSSCLLQRAVPPAAARQQPRFT. Histidine 557 is a binding site for Zn(2+). Glutamate 558 is an active-site residue. Zn(2+) contacts are provided by histidine 561 and histidine 564.

The protein belongs to the peptidase M3 family. It depends on Zn(2+) as a cofactor.

Its subcellular location is the mitochondrion matrix. It carries out the reaction Release of an N-terminal octapeptide as second stage of processing of some proteins imported into the mitochondrion.. Cleaves proteins, imported into the mitochondrion, to their mature size. While most mitochondrial precursor proteins are processed to the mature form in one step by mitochondrial processing peptidase (MPP), the sequential cleavage by MIP of an octapeptide after initial processing by MPP is a required step for a subgroup of nuclear-encoded precursor proteins destined for the matrix or the inner membrane. The sequence is that of Mitochondrial intermediate peptidase (OCT1) from Chaetomium globosum (strain ATCC 6205 / CBS 148.51 / DSM 1962 / NBRC 6347 / NRRL 1970) (Soil fungus).